The sequence spans 643 residues: Uromodulin (643 aa).

The signal sequence occupies residues 1-26 (MKCLFSPNFMWMAAVVTSWVIIPAAT). The EGF-like 1 domain maps to 32–66 (KSCSECHSNATCTVDGAATTCACQEGFTGDGLECV). 21 disulfides stabilise this stretch: Cys-34/Cys-43, Cys-37/Cys-52, Cys-54/Cys-65, Cys-71/Cys-85, Cys-79/Cys-94, Cys-96/Cys-108, Cys-114/Cys-128, Cys-122/Cys-137, Cys-139/Cys-150, Cys-152/Cys-163, Cys-157/Cys-172, Cys-176/Cys-269, Cys-197/Cys-284, Cys-219/Cys-257, Cys-225/Cys-289, Cys-250/Cys-258, Cys-299/Cys-308, Cys-302/Cys-317, Cys-319/Cys-349, Cys-337/Cys-427, and Cys-368/Cys-391. Asn-40 is a glycosylation site (N-linked (GlcNAc...) asparagine). The 43-residue stretch at 67–109 (DLDECAVLGAHNCSATKSCVNTLGSYTCVCPEGFLLSSELGCE) folds into the EGF-like 2; calcium-binding domain. A glycan (N-linked (GlcNAc...) asparagine) is linked at Asn-78. The 42-residue stretch at 110-151 (DVDECAEPGLSRCHALATCINGEGNYSCVCPAGYLGDGRHCE) folds into the EGF-like 3; calcium-binding domain. Asn-134 carries N-linked (GlcNAc...) asparagine glycosylation. Residues 152–173 (CSPGSCGPGLDCVREGDALVCV) form a beta hairpin region. Positions 174 to 293 (DPCQVHRILD…CHLAYCTDPS (120 aa)) are D10C. The N-linked (GlcNAc...) asparagine glycan is linked to Asn-234. N-linked (GlcNAc...) asparagine glycosylation is present at Asn-277. One can recognise an EGF-like 4 domain in the interval 294–325 (SVEGTCEECRVDEDCKSDNGEWHCQCKQDFNV). Asn-324 is a glycosylation site (N-linked (GlcNAc...) asparagine). Residues 336–431 (ECGVDDIKLS…RINFACSYPL (96 aa)) form a ZP-N region. Residues 336–587 (ECGVDDIKLS…EKCRPTCPET (252 aa)) enclose the ZP domain. N-linked (GlcNAc...) asparagine glycosylation is found at Asn-398 and Asn-449. The flexible ZP-N/ZP-C linker; important for secretion and polymerization into filaments stretch occupies residues 432–455 (DMKVSLKTSLQPMVSALNISMGGT). The internal hydrophobic patch (IHP) stretch occupies residues 456–466 (GTFTVRMALFQ). Residues 456–587 (GTFTVRMALF…EKCRPTCPET (132 aa)) form a ZP-C region. 3 cysteine pairs are disulfide-bonded: Cys-508–Cys-568, Cys-529–Cys-584, and Cys-573–Cys-580. N-linked (GlcNAc...) asparagine glycosylation occurs at Asn-515. Residues 588 to 591 (RFRS) are essential for cleavage by HPN. Positions 600–608 (VLNLGPITR) are external hydrophobic patch (EHP); regulates polymerization into filaments. Ser-621 carries GPI-anchor amidated serine lipidation. Residues 622–643 (SLGLLQVWLPLLLSATLTLMSP) constitute a propeptide, removed in mature form.

Homodimer that then polymerizes into long filaments. The filaments can additionally assemble laterally to form a sheet. The filaments consist of a zigzag-shaped backbone with laterally protruding arms which interact with bacterial adhesin fimH. Two fimH molecules can bind to a single UMOD monomer. Post-translationally, N-glycosylated. Proteolytically cleaved at a conserved C-terminal proteolytic cleavage site to generate the secreted form found in urine. This cleavage is catalyzed by HPN.

It is found in the apical cell membrane. The protein resides in the basolateral cell membrane. The protein localises to the cell projection. It localises to the cilium membrane. Its subcellular location is the secreted. Functionally, functions in biogenesis and organization of the apical membrane of epithelial cells of the thick ascending limb of Henle's loop (TALH), where it promotes formation of complex filamentous gel-like structure that may play a role in the water barrier permeability. May serve as a receptor for binding and endocytosis of cytokines (IL-1, IL-2) and TNF. Facilitates neutrophil migration across renal epithelia. Its function is as follows. In the urine, may contribute to colloid osmotic pressure, retards passage of positively charged electrolytes, and inhibits formation of liquid containing supersaturated salts and subsequent formation of salt crystals. Protects against urinary tract infections by binding to type 1 fimbriated E.coli. Binds to bacterial adhesin fimH which mediates the stable formation of bacterial aggregates, prevents the binding of E.coli to uroplakins UPK1A and UPK1B which act as urothelial receptors for type I fimbriae, and allows for pathogen clearance through micturation. Also promotes aggregation of other bacteria including K.pneumoniae, P.aeruginosa and S.mitis and so may also protect against other uropathogens. The protein is Uromodulin (UMOD) of Bos taurus (Bovine).